Reading from the N-terminus, the 297-residue chain is 4-hydroxy-tetrahydrodipicolinate synthase (297 aa).

Threonine 49 is a binding site for pyruvate. Tyrosine 137 functions as the Proton donor/acceptor in the catalytic mechanism. The Schiff-base intermediate with substrate role is filled by lysine 166. Isoleucine 208 is a pyruvate binding site.

The protein belongs to the DapA family. Homotetramer; dimer of dimers.

The protein resides in the cytoplasm. The enzyme catalyses L-aspartate 4-semialdehyde + pyruvate = (2S,4S)-4-hydroxy-2,3,4,5-tetrahydrodipicolinate + H2O + H(+). The protein operates within amino-acid biosynthesis; L-lysine biosynthesis via DAP pathway; (S)-tetrahydrodipicolinate from L-aspartate: step 3/4. In terms of biological role, catalyzes the condensation of (S)-aspartate-beta-semialdehyde [(S)-ASA] and pyruvate to 4-hydroxy-tetrahydrodipicolinate (HTPA). This Phocaeicola vulgatus (strain ATCC 8482 / DSM 1447 / JCM 5826 / CCUG 4940 / NBRC 14291 / NCTC 11154) (Bacteroides vulgatus) protein is 4-hydroxy-tetrahydrodipicolinate synthase.